The chain runs to 537 residues: Mitochondria-eating protein (537 aa).

Residues methionine 1–arginine 270 are interaction with YWHAG/14-3-3 protein gamma. Phosphoserine occurs at positions 13, 85, 123, 127, 154, and 157. Residues serine 109 to alanine 150 form a disordered region. A compositionally biased stretch (basic and acidic residues) spans lysine 110–aspartate 124. Residues asparagine 125–glutamine 137 show a composition bias toward polar residues. 2 coiled-coil regions span residues asparagine 152–lysine 184 and glutamine 210–arginine 243. Disordered regions lie at residues glutamine 171 to valine 212 and glutamate 233 to methionine 291. The segment covering glutamate 179 to proline 209 has biased composition (basic and acidic residues). The span at glycine 239–threonine 251 shows a compositional bias: low complexity. Basic residues predominate over residues arginine 252–serine 269. Phosphoserine is present on residues serine 283, serine 285, and serine 508.

It belongs to the MIEAP family. As to quaternary structure, interacts (via coiled-coil domains) with BNIP3L (via BH3 domain). Interacts (via coiled-coil domains) with BNIP3 (via BH3 domain). Interacts with YWHAG/14-3-3 protein gamma; a protein that also plays a role in MALM. In terms of tissue distribution, in testis, expressed primarily in spermatids.

Its subcellular location is the cytoplasm. The protein resides in the cytosol. It localises to the mitochondrion outer membrane. It is found in the mitochondrion matrix. Its function is as follows. Key regulator of mitochondrial quality that mediates the repairing or degradation of unhealthy mitochondria in response to mitochondrial damage. Mediator of mitochondrial protein catabolic process (also named MALM) by mediating the degradation of damaged proteins inside mitochondria by promoting the accumulation in the mitochondrial matrix of hydrolases that are characteristic of the lysosomal lumen. Also involved in mitochondrion degradation of damaged mitochondria by promoting the formation of vacuole-like structures (named MIV), which engulf and degrade unhealthy mitochondria by accumulating lysosomes. The physical interaction of SPATA18/MIEAP, BNIP3 and BNIP3L/NIX at the mitochondrial outer membrane regulates the opening of a pore in the mitochondrial double membrane in order to mediate the translocation of lysosomal proteins from the cytoplasm to the mitochondrial matrix. Binds cardiolipin. May form molecular condensates (non-membrane-bounded organelles) within mitochondria that compartmentalize and promote cardiolipin metabolism. The chain is Mitochondria-eating protein (Spata18) from Mus musculus (Mouse).